A 357-amino-acid chain; its full sequence is Putative minor fimbrial subunit PmfE (357 aa).

The first 28 residues, 1 to 28, serve as a signal peptide directing secretion; sequence MILNKKNIHSKSVMLFCAGIVSLMPLHA.

It localises to the fimbrium. This Proteus mirabilis (strain HI4320) protein is Putative minor fimbrial subunit PmfE (pmfE).